Reading from the N-terminus, the 356-residue chain is AT-hook motif nuclear-localized protein 1 (356 aa).

The segment at 1–127 is disordered; it reads MVLNMESTGE…PSHLPPPSSH (127 aa). Pro residues predominate over residues 49–66; sequence VTPPPPQPSSHHTAPPPL. The span at 88-97 shows a compositional bias: basic residues; it reads MKKKRGRPRK. Residues 89–97 carry the Bipartite nuclear localization signal motif; sequence KKKRGRPRK. Positions 89 to 101 form a DNA-binding region, a.T hook; the sequence is KKKRGRPRKYGPD. Residues 106-118 are compositionally biased toward low complexity; the sequence is ALSPKPISSAPAP. Residues 167–309 form the PPC domain; that stretch reads GGNFTPHIIT…KHDFMLSSPT (143 aa). Residues 270–287 form a required for nuclear localization region; sequence GLLVAASPVQVVVGSFLA. A Nuclear localization signal motif is present at residues 295–302; the sequence is KPKKNKHD.

The protein resides in the nucleus. The protein localises to the nucleoplasm. Its subcellular location is the chromosome. Its function is as follows. Transcription factor that specifically binds AT-rich DNA sequences related to the nuclear matrix attachment regions (MARs). May play a function in the positioning of chromatin fibers within the nucleus. This is AT-hook motif nuclear-localized protein 1 from Arabidopsis thaliana (Mouse-ear cress).